The primary structure comprises 240 residues: E3 ubiquitin-protein ligase LubX (240 aa).

2 consecutive U-box domains span residues 30 to 103 (TTPT…QTNY) and 125 to 198 (EIPD…RKRE).

In terms of processing, ubiquitinated in the presence of host E1 ubiquitin-activating enzyme, E2 ubiquitin-conjugating enzyme and ubiquitin.

The protein localises to the secreted. It localises to the host cell. It carries out the reaction S-ubiquitinyl-[E2 ubiquitin-conjugating enzyme]-L-cysteine + [acceptor protein]-L-lysine = [E2 ubiquitin-conjugating enzyme]-L-cysteine + N(6)-ubiquitinyl-[acceptor protein]-L-lysine.. Its function is as follows. Effector proteins function to alter host cell physiology and promote bacterial survival in host tissues. This protein is an E3 ubiquitin ligase that interferes with host's ubiquitination pathway. This Legionella pneumophila (strain Paris) protein is E3 ubiquitin-protein ligase LubX (lubX).